Reading from the N-terminus, the 97-residue chain is Co-chaperonin GroES (97 aa).

The protein belongs to the GroES chaperonin family. Heptamer of 7 subunits arranged in a ring. Interacts with the chaperonin GroEL.

It is found in the cytoplasm. In terms of biological role, together with the chaperonin GroEL, plays an essential role in assisting protein folding. The GroEL-GroES system forms a nano-cage that allows encapsulation of the non-native substrate proteins and provides a physical environment optimized to promote and accelerate protein folding. GroES binds to the apical surface of the GroEL ring, thereby capping the opening of the GroEL channel. The polypeptide is Co-chaperonin GroES (Aeromonas salmonicida).